The chain runs to 366 residues: Geranylgeranyl pyrophosphate synthase, chloroplastic/chromoplastic (366 aa).

A disordered region spans residues 44–65 (KRTVSSSSSSSLITKEDNNLKS). Residues K112, R115, and H144 each coordinate isopentenyl diphosphate. Mg(2+) contacts are provided by D151 and D157. R162 serves as a coordination point for dimethylallyl diphosphate. R163 provides a ligand contact to isopentenyl diphosphate. Residues K251, T252, Q289, K306, and K316 each coordinate dimethylallyl diphosphate.

Belongs to the FPP/GGPP synthase family. As to quaternary structure, dimer. Requires Mg(2+) as cofactor.

It is found in the plastid. It localises to the chloroplast stroma. The protein resides in the chromoplast. It catalyses the reaction isopentenyl diphosphate + dimethylallyl diphosphate = (2E)-geranyl diphosphate + diphosphate. The catalysed reaction is isopentenyl diphosphate + (2E)-geranyl diphosphate = (2E,6E)-farnesyl diphosphate + diphosphate. It carries out the reaction isopentenyl diphosphate + (2E,6E)-farnesyl diphosphate = (2E,6E,10E)-geranylgeranyl diphosphate + diphosphate. The protein operates within isoprenoid biosynthesis; farnesyl diphosphate biosynthesis; farnesyl diphosphate from geranyl diphosphate and isopentenyl diphosphate: step 1/1. It functions in the pathway isoprenoid biosynthesis; geranyl diphosphate biosynthesis; geranyl diphosphate from dimethylallyl diphosphate and isopentenyl diphosphate: step 1/1. It participates in isoprenoid biosynthesis; geranylgeranyl diphosphate biosynthesis; geranylgeranyl diphosphate from farnesyl diphosphate and isopentenyl diphosphate: step 1/1. Functionally, catalyzes the trans-addition of the three molecules of IPP onto DMAPP to form geranylgeranyl pyrophosphate. This Sinapis alba (White mustard) protein is Geranylgeranyl pyrophosphate synthase, chloroplastic/chromoplastic (GGPS1).